Here is a 1298-residue protein sequence, read N- to C-terminus: Outer capsid protein VP1 (1298 aa).

The protein belongs to the aquareoviridae outer capsid VP1 protein family.

It localises to the virion. It carries out the reaction a 5'-end diphospho-ribonucleoside in mRNA + GTP + H(+) = a 5'-end (5'-triphosphoguanosine)-ribonucleoside in mRNA + diphosphate. The enzyme catalyses a 5'-end (5'-triphosphoguanosine)-ribonucleoside in mRNA + S-adenosyl-L-methionine = a 5'-end (N(7)-methyl 5'-triphosphoguanosine)-ribonucleoside in mRNA + S-adenosyl-L-homocysteine. In terms of biological role, outer capsid protein involved in mRNA capping. Catalyzes the last 3 enzymatic activities for formation of the 5' cap structure on the viral plus-strand transcripts, namely the RNA guanylyltransferase, RNA-7N- and RNA-2'O-methyltransferase activities. In Ctenopharyngodon idella (Grass carp), this protein is Outer capsid protein VP1 (S1).